The following is a 399-amino-acid chain: Tryptophan synthase beta chain (399 aa).

Residue lysine 86 is modified to N6-(pyridoxal phosphate)lysine.

This sequence belongs to the TrpB family. Tetramer of two alpha and two beta chains. Pyridoxal 5'-phosphate serves as cofactor.

The catalysed reaction is (1S,2R)-1-C-(indol-3-yl)glycerol 3-phosphate + L-serine = D-glyceraldehyde 3-phosphate + L-tryptophan + H2O. It participates in amino-acid biosynthesis; L-tryptophan biosynthesis; L-tryptophan from chorismate: step 5/5. Its function is as follows. The beta subunit is responsible for the synthesis of L-tryptophan from indole and L-serine. The polypeptide is Tryptophan synthase beta chain (trpB) (Buchnera aphidicola subsp. Schizaphis graminum (strain Sg)).